Consider the following 379-residue polypeptide: Retron Se72 reverse transcriptase (379 aa).

The region spanning 1 to 245 (MNKPRFNGTP…SKLSVTGLWV (245 aa)) is the Reverse transcriptase domain. Positions 109, 188, and 189 each coordinate Mg(2+).

This sequence belongs to the bacterial reverse transcriptase family.

It catalyses the reaction DNA(n) + a 2'-deoxyribonucleoside 5'-triphosphate = DNA(n+1) + diphosphate. Functionally, reverse transcriptase (RT) component of antiviral defense system retron Se72, composed of a non-coding RNA (ncRNA), this reverse transcriptase (RT) and the following cold shock-like protein. Expression of retron Se72 confers protection against bacteriophage lambda. At multiplicity of infection (MOI) of 0.02 cultures slow growth when infected with lambda but do not collapse, at MOI 2 cultures enter growth stasis. Responsible for synthesis of msDNA (a branched molecule with RNA linked by a 2',5'-phosphodiester bond to ssDNA). The retron transcript serves as primer (from a conserved internal G residue) and template for the reaction, and codes for the RT. The DNA segment is predicted to be 72 bases long. This Salmonella heidelberg (strain 579083-10) protein is Retron Se72 reverse transcriptase.